The following is a 164-amino-acid chain: Lipoprotein signal peptidase (164 aa).

4 consecutive transmembrane segments (helical) span residues 12–32 (WLWL…LILQ), 42–62 (LFPS…SFLA), 70–90 (WFFA…MYRS), and 102–122 (ALII…GFVV). Residues aspartate 123 and aspartate 141 contribute to the active site. A helical membrane pass occupies residues 137–157 (FNLADTAICVGAALIVLEGFL).

It belongs to the peptidase A8 family.

The protein localises to the cell inner membrane. The catalysed reaction is Release of signal peptides from bacterial membrane prolipoproteins. Hydrolyzes -Xaa-Yaa-Zaa-|-(S,diacylglyceryl)Cys-, in which Xaa is hydrophobic (preferably Leu), and Yaa (Ala or Ser) and Zaa (Gly or Ala) have small, neutral side chains.. Its pathway is protein modification; lipoprotein biosynthesis (signal peptide cleavage). This protein specifically catalyzes the removal of signal peptides from prolipoproteins. In Shigella flexneri serotype 5b (strain 8401), this protein is Lipoprotein signal peptidase.